The chain runs to 158 residues: C-type natriuretic peptide 3 (158 aa).

The N-terminal stretch at 1–21 (MSLNLPGYALFFILLVASSGA) is a signal peptide. Residues 22–136 (KPAPDLQILE…SKRSRSRYKK (115 aa)) constitute a propeptide that is removed on maturation. Positions 32–95 (PPLSSLEEQE…EVQERGRGTG (64 aa)) are disordered. Over residues 47–64 (VQEKVQEQQEEVQEKVQE) the composition is skewed to basic and acidic residues. A compositionally biased stretch (acidic residues) spans 65–86 (QQEEVQEQQEEVQEQQEEQQEE). A disulfide bridge connects residues C142 and C158.

It belongs to the natriuretic peptide family.

The protein resides in the secreted. Exhibits natriuretic and vasodepressant activity. Has cGMP-stimulating activity. May help to regulate body fluid homeostasis in a variety of aquatic environments. The chain is C-type natriuretic peptide 3 from Takifugu rubripes (Japanese pufferfish).